The following is a 426-amino-acid chain: Putative phosphate permease CT_962 (426 aa).

Transmembrane regions (helical) follow at residues 1–21 (MWLL…NIGA), 37–57 (LTLK…AVLL), 83–103 (VFGM…ASFC), 104–124 (GWPV…GIIL), 140–160 (VSWL…FSFI), 183–203 (AIII…APVI), 207–227 (PALR…IWGI), 260–280 (LIVE…MSFA), 309–329 (VLLV…ATWG), 365–385 (LGFP…IGFA), and 399–419 (IVLS…VFFL).

This sequence belongs to the inorganic phosphate transporter (PiT) (TC 2.A.20) family.

It is found in the cell membrane. In terms of biological role, potential transporter for phosphate. This Chlamydia trachomatis serovar D (strain ATCC VR-885 / DSM 19411 / UW-3/Cx) protein is Putative phosphate permease CT_962.